Consider the following 87-residue polypeptide: Venom serine protease inhibitor (87 aa).

An N-terminal signal peptide occupies residues 1 to 23 (MPRLVLVSFLFLAIFSVFIGGFA). Cystine bridges form between cysteine 27-cysteine 61, cysteine 36-cysteine 57, cysteine 40-cysteine 53, cysteine 44-cysteine 81, and cysteine 63-cysteine 75. The TIL domain occupies 27 to 81 (CPRNEIFTRCHAACQPSCARLARKPFCIKICKPGCICTSGYLRNKNNVCVPRSRC).

It belongs to the serine protease inhibitor-like (TIL domain-containing) family. Specifically expressed by the venom gland.

The protein localises to the secreted. Antifibrinolytic and antimicrobial serine protease inhibitor. Inhibits trypsin, plasmin and microbial serine proteases but not chymotrypsin, thrombin and elastase. Inhibits the plasmin-mediated degradation of fibrin to fibrin degradation products. Also binds to bacterial and fungal surfaces and exhibits antimicrobial activity against fungi as well as Gram-positive and Gram-negative bacteria. The polypeptide is Venom serine protease inhibitor (Apis cerana (Indian honeybee)).